We begin with the raw amino-acid sequence, 523 residues long: MESAPAAPDPAASEPGSSGADAAAGSRETPLNQESARKSEPPAPVRRQSYSSTSRGISVTKKTHTSQIEIIPCKICGDKSSGIHYGVITCEGCKGFFRRSQQSNATYSCPRQKNCLIDRTSRNRCQHCRLQKCLAVGMSRDAVKFGRMSKKQRDSLYAEVQKHRMQQQQRDHQQQPGEAEPLTPTYNISANGLTELHDDLSNYIDGHTPEGSKADSAVSSFYLDIQPSPDQSGLDINGIKPEPICDYTPASGFFPYCSFTNGETSPTVSMAELEHLAQNISKSHLETCQYLREELQQITWQTFLQEEIENYQNKQREVMWQLCAIKITEAIQYVVEFAKRIDGFMELCQNDQIVLLKAGSLEVVFIRMCRAFDSQNNTVYFDGKYASPDVFKSLGCEDFISFVFEFGKSLCSMHLTEDEIALFSAFVLMSADRSWLQEKVKIEKLQQKIQLALQHVLQKNHREDGILTKLICKVSTLRALCGRHTEKLMAFKAIYPDIVRLHFPPLYKELFTSEFEPAMQIDG.

Low complexity predominate over residues 1–26; sequence MESAPAAPDPAASEPGSSGADAAAGS. Residues 1-63 form a disordered region; that stretch reads MESAPAAPDP…SRGISVTKKT (63 aa). An N6-methyllysine modification is found at Lys-38. Residues 48 to 57 show a composition bias toward polar residues; the sequence is QSYSSTSRGI. 2 NR C4-type zinc fingers span residues 73–93 and 109–133; these read CKICGDKSSGIHYGVITCEGC and CPRQKNCLIDRTSRNRCQHCRLQKC. The nuclear receptor DNA-binding region spans 73-138; it reads CKICGDKSSG…RLQKCLAVGM (66 aa). Positions 154–183 are disordered; sequence DSLYAEVQKHRMQQQQRDHQQQPGEAEPLT. At Thr-183 the chain carries Phosphothreonine; by MAPK1. A Glycyl lysine isopeptide (Lys-Gly) (interchain with G-Cter in SUMO) cross-link involves residue Lys-240. Residues 272 to 510 enclose the NR LBD domain; sequence ELEHLAQNIS…LHFPPLYKEL (239 aa). The AF-2 motif lies at 506–523; that stretch reads LYKELFTSEFEPAMQIDG.

The protein belongs to the nuclear hormone receptor family. NR1 subfamily. Monomer. Interacts (via the DNA-binding domain) with HIF1A; the interaction enhances HIF1A transcription under hypoxia through increasing protein stability. Interacts with CEBPB; the interaction disrupts the interaction CEBPB:EP300. Interacts with the coactivators NCOA2, PPARGC1A (via LXXLL motif), EP300 and MED1. Interacts with the corepressor NCOR1. Interacts with MAGED1 and CTNNB1. Interacts with CRY1 and PER2. Interacts (via AF-2 motif) with PROX1. Interacts with NRIP1. Isoform 4 interacts (via AF-2 motif) with isoform 1 of FOXP3 (via LXXLL motif). In terms of processing, phosphorylation by conventional PKCs in neurons inhibits transcriptional activity. Phosphorylated on Thr-183 by MAPK1/ERK1 in vitro. Sumoylated by SENP1 and SENP2. Sumoylation, promoted by PIAS2, PIAS3, PIAS4 but not PIAS1, enhances the transcriptional activity. Desumoylated by SENP1. Post-translationally, ubiquitinated, leading to its degradation by the proteasome. Proteasomal degradation is required for efficient transcriptional activity and is prevented by HR. In terms of processing, monomethylated at Lys-38 by EZH2, this creates a degron recognized by a DCX (DDB1-DCAF1/VPRBP-CUL4A-RBX1) E3 ubiquitin ligase complex. In terms of tissue distribution, widely expressed in a number of tissues. Expressed in both regulatory T-cells (Treg) and effector T-cells (Teff). Isoform 4: Highly expressed in the central nervous system, including in the cerebellum.

The protein resides in the nucleus. Functionally, nuclear receptor that binds DNA as a monomer to ROR response elements (RORE) containing a single core motif half-site 5'-AGGTCA-3' preceded by a short A-T-rich sequence. Key regulator of embryonic development, cellular differentiation, immunity, circadian rhythm as well as lipid, steroid, xenobiotics and glucose metabolism. Considered to have intrinsic transcriptional activity, have some natural ligands like oxysterols that act as agonists (25-hydroxycholesterol) or inverse agonists (7-oxygenated sterols), enhancing or repressing the transcriptional activity, respectively. Recruits distinct combinations of cofactors to target genes regulatory regions to modulate their transcriptional expression, depending on the tissue, time and promoter contexts. Regulates genes involved in photoreceptor development including OPN1SW, OPN1SM and ARR3 and skeletal muscle development with MYOD1. Required for proper cerebellum development. Regulates SHH gene expression, among others, to induce granule cells proliferation as well as expression of genes involved in calcium-mediated signal transduction. Regulates the circadian expression of several clock genes, including CLOCK, BMAL1, NPAS2 and CRY1. Competes with NR1D1 for binding to their shared DNA response element on some clock genes such as BMAL1, CRY1 and NR1D1 itself, resulting in NR1D1-mediated repression or RORA-mediated activation of clock genes expression, leading to the circadian pattern of clock genes expression. Therefore influences the period length and stability of the clock. Regulates genes involved in lipid metabolism such as apolipoproteins APOA1, APOA5, APOC3 and PPARG. In liver, has specific and redundant functions with RORC as positive or negative modulator of expression of genes encoding phase I and phase II proteins involved in the metabolism of lipids, steroids and xenobiotics, such as CYP7B1 and SULT2A1. Induces a rhythmic expression of some of these genes. In addition, interplays functionally with NR1H2 and NR1H3 for the regulation of genes involved in cholesterol metabolism. Also involved in the regulation of hepatic glucose metabolism through the modulation of G6PC1 and PCK1. In adipose tissue, plays a role as negative regulator of adipocyte differentiation, probably acting through dual mechanisms. May suppress CEBPB-dependent adipogenesis through direct interaction and PPARG-dependent adipogenesis through competition for DNA-binding. Downstream of IL6 and TGFB and synergistically with RORC isoform 2, is implicated in the lineage specification of uncommitted CD4(+) T-helper (T(H)) cells into T(H)17 cells, antagonizing the T(H)1 program. Probably regulates IL17 and IL17F expression on T(H) by binding to the essential enhancer conserved non-coding sequence 2 (CNS2) in the IL17-IL17F locus. Involved in hypoxia signaling by interacting with and activating the transcriptional activity of HIF1A. May inhibit cell growth in response to cellular stress. May exert an anti-inflammatory role by inducing CHUK expression and inhibiting NF-kappa-B signaling. The chain is Nuclear receptor ROR-alpha (RORA) from Homo sapiens (Human).